Reading from the N-terminus, the 398-residue chain is Cytochrome b (398 aa).

Helical transmembrane passes span 33–53, 77–98, 113–133, and 178–198; these read FGSLLGLCLVAQIITGLFLAM, WLIRNLHANGASFFFICVYLHI, WNIGVILLLLVMMTAFVGYVL, and FFAFHFLFPFLIAAFTIIHLL. H83 and H97 together coordinate heme b. H182 and H196 together coordinate heme b. Residue H201 coordinates a ubiquinone. Transmembrane regions (helical) follow at residues 226–246, 288–308, 320–340, and 347–367; these read YKDLLGFAILLIALISLSLFA, LGGVLALLASILILMLVPILH, FTQLLFWLLVADVIILTWIGG, and YVVIGQIASFLYFFLFLFLIP.

It belongs to the cytochrome b family. As to quaternary structure, the cytochrome bc1 complex contains 3 respiratory subunits (MT-CYB, CYC1 and UQCRFS1), 2 core proteins (UQCRC1 and UQCRC2) and probably 6 low-molecular weight proteins. The cofactor is heme b.

It localises to the mitochondrion inner membrane. In terms of biological role, component of the ubiquinol-cytochrome c reductase complex (complex III or cytochrome b-c1 complex) that is part of the mitochondrial respiratory chain. The b-c1 complex mediates electron transfer from ubiquinol to cytochrome c. Contributes to the generation of a proton gradient across the mitochondrial membrane that is then used for ATP synthesis. This chain is Cytochrome b (mt-cyb), found in Channa asiatica (Small snakehead).